We begin with the raw amino-acid sequence, 217 residues long: Small ribosomal subunit protein uS3 (217 aa).

Residues Ile38 to Lys106 form the KH type-2 domain.

The protein belongs to the universal ribosomal protein uS3 family. As to quaternary structure, part of the 30S ribosomal subunit. Forms a tight complex with proteins S10 and S14.

In terms of biological role, binds the lower part of the 30S subunit head. Binds mRNA in the 70S ribosome, positioning it for translation. In Lactococcus lactis subsp. cremoris (strain MG1363), this protein is Small ribosomal subunit protein uS3.